Here is a 268-residue protein sequence, read N- to C-terminus: Tryptophan synthase alpha chain (268 aa).

Residues Glu49 and Asp60 each act as proton acceptor in the active site.

The protein belongs to the TrpA family. As to quaternary structure, tetramer of two alpha and two beta chains.

It carries out the reaction (1S,2R)-1-C-(indol-3-yl)glycerol 3-phosphate + L-serine = D-glyceraldehyde 3-phosphate + L-tryptophan + H2O. It functions in the pathway amino-acid biosynthesis; L-tryptophan biosynthesis; L-tryptophan from chorismate: step 5/5. Its function is as follows. The alpha subunit is responsible for the aldol cleavage of indoleglycerol phosphate to indole and glyceraldehyde 3-phosphate. In Xanthomonas oryzae pv. oryzae (strain PXO99A), this protein is Tryptophan synthase alpha chain.